A 180-amino-acid chain; its full sequence is FMN reductase (NADH) RutF (180 aa).

Belongs to the non-flavoprotein flavin reductase family. RutF subfamily.

It carries out the reaction FMNH2 + NAD(+) = FMN + NADH + 2 H(+). Catalyzes the reduction of FMN to FMNH2 which is used to reduce pyrimidine by RutA via the Rut pathway. The sequence is that of FMN reductase (NADH) RutF from Bradyrhizobium diazoefficiens (strain JCM 10833 / BCRC 13528 / IAM 13628 / NBRC 14792 / USDA 110).